The following is a 472-amino-acid chain: ATP synthase subunit beta (472 aa).

157-164 provides a ligand contact to ATP; that stretch reads GGAGVGKT.

This sequence belongs to the ATPase alpha/beta chains family. In terms of assembly, F-type ATPases have 2 components, CF(1) - the catalytic core - and CF(0) - the membrane proton channel. CF(1) has five subunits: alpha(3), beta(3), gamma(1), delta(1), epsilon(1). CF(0) has three main subunits: a(1), b(2) and c(9-12). The alpha and beta chains form an alternating ring which encloses part of the gamma chain. CF(1) is attached to CF(0) by a central stalk formed by the gamma and epsilon chains, while a peripheral stalk is formed by the delta and b chains.

Its subcellular location is the cell membrane. It catalyses the reaction ATP + H2O + 4 H(+)(in) = ADP + phosphate + 5 H(+)(out). In terms of biological role, produces ATP from ADP in the presence of a proton gradient across the membrane. The catalytic sites are hosted primarily by the beta subunits. In Desulforamulus reducens (strain ATCC BAA-1160 / DSM 100696 / MI-1) (Desulfotomaculum reducens), this protein is ATP synthase subunit beta.